Reading from the N-terminus, the 206-residue chain is Superoxide dismutase [Mn] (206 aa).

4 residues coordinate Mn(2+): His-27, His-82, Asp-168, and His-172.

This sequence belongs to the iron/manganese superoxide dismutase family. The cofactor is Mn(2+).

The enzyme catalyses 2 superoxide + 2 H(+) = H2O2 + O2. Destroys superoxide anion radicals which are normally produced within the cells and which are toxic to biological systems. The protein is Superoxide dismutase [Mn] (sodA) of Lactococcus lactis subsp. lactis (strain IL1403) (Streptococcus lactis).